Reading from the N-terminus, the 112-residue chain is Peptidyl-prolyl cis-trans isomerase (112 aa).

A disordered region spans residues 1 to 22; it reads MGVEKQVISSGNGQDFPKPGDR. The 89-residue stretch at 20-108 folds into the PPIase FKBP-type domain; the sequence is GDRITMHYTG…LFDVELLAIN (89 aa).

Belongs to the FKBP-type PPIase family. FKBP1 subfamily.

The protein localises to the cytoplasm. It is found in the nucleus. The catalysed reaction is [protein]-peptidylproline (omega=180) = [protein]-peptidylproline (omega=0). PPIases accelerate the folding of proteins. It catalyzes the cis-trans isomerization of proline imidic peptide bonds in oligopeptides. Has an important role in sexual development and serves as the target for rapamycin action. This is Peptidyl-prolyl cis-trans isomerase (fkh1) from Schizosaccharomyces pombe (strain 972 / ATCC 24843) (Fission yeast).